Reading from the N-terminus, the 954-residue chain is DNA repair and telomere maintenance protein NBS1 (954 aa).

The FHA domain maps to 22–85 (YLFGRTVAEA…KGTLVNGVQI (64 aa)). 2 consecutive BRCT domains span residues 107–186 (TLKI…NAIV) and 244–349 (GYTF…LEAI). Residues 368-377 (VSVSASVEPQ) show a composition bias toward polar residues. Disordered regions lie at residues 368–431 (VSVS…FKGF), 444–506 (QAQS…PLPE), 528–580 (IEAG…KQED), 630–654 (VRQP…WDPR), and 692–954 (GIGD…GRRR). Residues 378-393 (SSEKVRPAVEDRKEVE) show a composition bias toward basic and acidic residues. Residues 416–428 (PHRRERRTGRSRF) are compositionally biased toward basic residues. Over residues 458–471 (PSASQDSLFVSQRE) the composition is skewed to polar residues. Residues 541 to 554 (PEPEREDEDVEMVE) show a composition bias toward acidic residues. 2 stretches are compositionally biased toward basic and acidic residues: residues 640-654 (RTRE…WDPR) and 704-715 (GRVPRRPKETQT). Over residues 726–737 (DGSGFAAAAASG) the composition is skewed to low complexity. Residues 738–751 (KGKEKDKENEKEVG) are compositionally biased toward basic and acidic residues. 2 stretches are compositionally biased toward low complexity: residues 801 to 815 (EVVS…ASEP) and 826 to 842 (RANA…SQTQ). Residues 936–945 (GSEEESEDDE) show a composition bias toward acidic residues.

It belongs to the Nibrin family. In terms of assembly, component of the MRN complex composed of two heterodimers RAD50 and MRE11 associated with a single NBS1.

Its subcellular location is the nucleus. It is found in the chromosome. In terms of biological role, component of the MRN complex, which plays a central role in double-strand break (DSB) repair, DNA recombination, maintenance of telomere integrity and meiosis. The MRN complex is involved in the repair of DNA double-strand breaks (DSBs) via homologous recombination (HR), an error-free mechanism which primarily occurs during S and G2 phases. The complex (1) mediates the end resection of damaged DNA, which generates proper single-stranded DNA, a key initial steps in HR, and is (2) required for the recruitment of other repair factors and efficient activation of ATM and ATR upon DNA damage. The MRN complex possesses single-strand endonuclease activity and double-strand-specific 3'-5' exonuclease activity, which are provided by MRE11, to initiate end resection, which is required for single-strand invasion and recombination. Within the MRN complex, NBS1 acts as a protein-protein adapter, which specifically recognizes and binds phosphorylated proteins, promoting their recruitment to DNA damage sites. Recruits MRE11 and RAD50 components of the MRN complex to DSBs in response to DNA damage. This is DNA repair and telomere maintenance protein NBS1 from Chaetomium thermophilum (strain DSM 1495 / CBS 144.50 / IMI 039719) (Thermochaetoides thermophila).